Here is a 287-residue protein sequence, read N- to C-terminus: Pyridoxal kinase PdxY (287 aa).

Residues S9 and 44–45 (TQ) contribute to the substrate site. Residues D111, A143, E148, K181, and 208 to 211 (RPLV) each bind ATP. D223 is a substrate binding site.

This sequence belongs to the pyridoxine kinase family. PdxY subfamily. As to quaternary structure, homodimer. It depends on Mg(2+) as a cofactor.

The enzyme catalyses pyridoxal + ATP = pyridoxal 5'-phosphate + ADP + H(+). The protein operates within cofactor metabolism; pyridoxal 5'-phosphate salvage; pyridoxal 5'-phosphate from pyridoxal: step 1/1. Functionally, pyridoxal kinase involved in the salvage pathway of pyridoxal 5'-phosphate (PLP). Catalyzes the phosphorylation of pyridoxal to PLP. The polypeptide is Pyridoxal kinase PdxY (Photorhabdus laumondii subsp. laumondii (strain DSM 15139 / CIP 105565 / TT01) (Photorhabdus luminescens subsp. laumondii)).